Here is a 99-residue protein sequence, read N- to C-terminus: Small ribosomal subunit protein bS18 (99 aa).

Positions 1 to 25 (MAESKGRPGSASQRPTGGDKAIAGQ) are disordered.

The protein belongs to the bacterial ribosomal protein bS18 family. As to quaternary structure, part of the 30S ribosomal subunit. Forms a tight heterodimer with protein bS6.

Binds as a heterodimer with protein bS6 to the central domain of the 16S rRNA, where it helps stabilize the platform of the 30S subunit. In Solibacter usitatus (strain Ellin6076), this protein is Small ribosomal subunit protein bS18.